Consider the following 729-residue polypeptide: Kinesin-like protein KAR3 (729 aa).

Residues 1 to 48 (MESLPRTPTKGRSTQHLSTPSPKNDILAMNGHKRRNTTTPPPKHTLLK) form a disordered region. Residues 1-109 (MESLPRTPTK…ENVNELNRTQ (109 aa)) are globular. A compositionally biased stretch (polar residues) spans 10–22 (KGRSTQHLSTPSP). Residues 110–357 (AILFEKKATL…LEEYIKDTEL (248 aa)) are a coiled coil. 13 residues coordinate ATP: asparagine 386, arginine 388, arginine 392, glutamate 454, glycine 477, serine 478, glycine 479, lysine 480, threonine 481, phenylalanine 482, glutamate 554, lysine 579, and threonine 694. One can recognise a Kinesin motor domain in the interval 386–723 (NIRVYCRIRP…LRFASKVNST (338 aa)).

Belongs to the TRAFAC class myosin-kinesin ATPase superfamily. Kinesin family. NCD subfamily. Interacts with CIK1; the interaction is direct. Interacts with VIK1; the interaction is direct.

Its subcellular location is the cytoplasm. It localises to the cytoskeleton. It is found in the microtubule organizing center. The protein localises to the spindle pole body. The protein resides in the nucleus. Its subcellular location is the chromosome. It localises to the spindle. The catalysed reaction is ATP + H2O = ADP + phosphate + H(+). It carries out the reaction ATP + H2O + a kinesin associated with a microtubule at position (n) = ADP + phosphate + a kinesin associated with a microtubule at position (n-1, toward the minus end).. Functionally, minus end-directed microtubule (MT) motor involved in spindle midzone assembly, poleward transport of newly captured kinetochores along the lateral side of MTs, karyogamy (nuclear fusion) during mating, and with an essential function in meiosis I. Functions together with the accessory proteins CIK1 or VIK1. Drives the poleward transport of newly captured kinetochores along the lateral side of MTs, both during S-phase and during M-phase. To contribute to spindle midzone assembly during mitotic metaphase, the nuclear KAR3-CIK1 motor cross-links anti-parallel microtubules to align them on the spindle axis; as the motor travels polewards splayed microtubules are pulled into alignment. During the karyogamy (nuclear fusion) step of mating, KAR3-CIK1 cross-links antiparallel cytoplasmic microtubules emanating from the spindle pole bodies of mating partners; the motor activity of KAR3 creates the force that pulls the nuclei together by sliding cross-linked microtubules past one another. KAR3-CIK1 promotes microtubule shortening predominantly from the microtubule plus-end. Together with cytoplasmic VIK1, may act to stabilize microtubules. Requires accessory protein VIK1 for spindle pole body localization and to allow the CIN8 and KIP1 motors to generate outwardly directed spindle forces. Essential during meiosis I. The ATPase activity is stimulated by microtubule-binding. The chain is Kinesin-like protein KAR3 (KAR3) from Saccharomyces cerevisiae (strain ATCC 204508 / S288c) (Baker's yeast).